A 704-amino-acid chain; its full sequence is ATP-dependent zinc metalloprotease FtsH (704 aa).

At 1-17 (MADSAKTPRGKKRRPFT) the chain is on the cytoplasmic side. The helical transmembrane segment at 18-38 (GLALWIIVALLLGMAMFSLFG) threads the bilayer. The Extracellular segment spans residues 39–127 (RDGYQQIDTQ…DEIASSSWWS (89 aa)). A helical transmembrane segment spans residues 128 to 148 (TLLLSFLPLLIFIGLFWFLIM). Over 149–704 (NAQGGGKAMQ…GSAGTDGTGR (556 aa)) the chain is Cytoplasmic. 217–224 (GPPGTGKT) provides a ligand contact to ATP. Histidine 439 lines the Zn(2+) pocket. Residue glutamate 440 is part of the active site. Positions 443 and 515 each coordinate Zn(2+). A disordered region spans residues 624–704 (PREVWISSTE…GSAGTDGTGR (81 aa)). Residues 681-704 (PHGGEPGGGGYGYDGSAGTDGTGR) show a composition bias toward gly residues.

The protein in the central section; belongs to the AAA ATPase family. In the C-terminal section; belongs to the peptidase M41 family. As to quaternary structure, homohexamer. The cofactor is Zn(2+).

The protein resides in the cell membrane. In terms of biological role, acts as a processive, ATP-dependent zinc metallopeptidase for both cytoplasmic and membrane proteins. Plays a role in the quality control of integral membrane proteins. The protein is ATP-dependent zinc metalloprotease FtsH of Brachybacterium faecium (strain ATCC 43885 / DSM 4810 / JCM 11609 / LMG 19847 / NBRC 14762 / NCIMB 9860 / 6-10).